The sequence spans 92 residues: Probable Fe(2+)-trafficking protein (92 aa).

Belongs to the Fe(2+)-trafficking protein family.

In terms of biological role, could be a mediator in iron transactions between iron acquisition and iron-requiring processes, such as synthesis and/or repair of Fe-S clusters in biosynthetic enzymes. This is Probable Fe(2+)-trafficking protein from Shewanella pealeana (strain ATCC 700345 / ANG-SQ1).